Here is a 109-residue protein sequence, read N- to C-terminus: Class I hydrophobin SC1 (109 aa).

The first 22 residues, 1–22 (MRFSLAILALPVLAAATAVPRG), serve as a signal peptide directing secretion. Intrachain disulfides connect Cys-27/Cys-88, Cys-34/Cys-82, Cys-35/Cys-69, and Cys-89/Cys-102.

Belongs to the fungal hydrophobin family. As to quaternary structure, self-assembles to form functional amyloid fibrils called rodlets. Self-assembly into fibrillar rodlets occurs spontaneously at hydrophobic:hydrophilic interfaces and the rodlets further associate laterally to form amphipathic monolayers.

Its subcellular location is the secreted. It is found in the cell wall. Functionally, aerial growth, conidiation, and dispersal of filamentous fungi in the environment rely upon a capability of their secreting small amphipathic proteins called hydrophobins (HPBs) with low sequence identity. Class I can self-assemble into an outermost layer of rodlet bundles on aerial cell surfaces, conferring cellular hydrophobicity that supports fungal growth, development and dispersal; whereas Class II form highly ordered films at water-air interfaces through intermolecular interactions but contribute nothing to the rodlet structure. SC1 is a dikaryon-specific class I hydrophobin that contributes to the formation of aerial hyphae and fruiting bodies. The sequence is that of Class I hydrophobin SC1 from Schizophyllum commune (Split gill fungus).